The primary structure comprises 318 residues: Ribosomal RNA small subunit methyltransferase H (318 aa).

Residues 42–44 (GGH), Asp62, Phe86, Asp108, and Gln115 each bind S-adenosyl-L-methionine.

Belongs to the methyltransferase superfamily. RsmH family.

Its subcellular location is the cytoplasm. The enzyme catalyses cytidine(1402) in 16S rRNA + S-adenosyl-L-methionine = N(4)-methylcytidine(1402) in 16S rRNA + S-adenosyl-L-homocysteine + H(+). Its function is as follows. Specifically methylates the N4 position of cytidine in position 1402 (C1402) of 16S rRNA. This Yersinia pestis (strain Pestoides F) protein is Ribosomal RNA small subunit methyltransferase H.